Consider the following 155-residue polypeptide: Small ribosomal subunit protein uS7c (155 aa).

Belongs to the universal ribosomal protein uS7 family. As to quaternary structure, part of the 30S ribosomal subunit.

It is found in the plastid. The protein resides in the chloroplast. One of the primary rRNA binding proteins, it binds directly to 16S rRNA where it nucleates assembly of the head domain of the 30S subunit. The protein is Small ribosomal subunit protein uS7c (rps7) of Dioscorea bulbifera (Air potato).